A 418-amino-acid chain; its full sequence is Putative heat shock protein HSP 90-alpha A4 (418 aa).

Residues Asp33, Lys52, Phe78, and Arg204 each coordinate ATP. Disordered regions lie at residues 255–289 and 383–418; these read EDLE…TSAK and GLGT…RMEK. A compositionally biased stretch (basic and acidic residues) spans 265–274; sequence EKKKQEEGKQ.

Belongs to the heat shock protein 90 family. In terms of assembly, homodimer.

Its subcellular location is the cytoplasm. Functionally, putative molecular chaperone that may promote the maturation, structural maintenance and proper regulation of specific target proteins. The chain is Putative heat shock protein HSP 90-alpha A4 (HSP90AA4P) from Homo sapiens (Human).